Here is a 375-residue protein sequence, read N- to C-terminus: Cyclic AMP receptor 2 (375 aa).

Residues 1–10 (MTIMSDIIAQ) are Extracellular-facing. A helical transmembrane segment spans residues 11 to 30 (RTILLIADFSSIIGCSLVLI). Topologically, residues 31-44 (GFWRLKLLRNHITK) are cytoplasmic. A helical transmembrane segment spans residues 45-65 (IISLFCATSLFKDVISTIITL). The Extracellular segment spans residues 66–82 (LYKPDQTESGFPCYLHA). The helical transmembrane segment at 83–108 (IVITFGSLACWLWTLMLSFSIYNLIV) threads the bilayer. At 109 to 119 (RREPEPERFEK) the chain is on the cytoplasmic side. Residues 120 to 138 (FYFCLCYGLPLISTIVMLS) form a helical membrane-spanning segment. At 139–161 (THIIQPVGGWCWIGDNYDGYRFG) the chain is on the extracellular side. The chain crosses the membrane as a helical span at residues 162–180 (LFYGPFFFIWGTSAILVGL). At 181-204 (TSKYTYSVIRSSVSDNKDKHMTYQ) the chain is on the cytoplasmic side. Residue S192 is modified to Phosphoserine. A helical membrane pass occupies residues 205–223 (FKLINYIVVFLVCWVFAIV). Residues 224–234 (NRILNGLNQFP) lie on the Extracellular side of the membrane. A helical transmembrane segment spans residues 235 to 259 (TVPNVLHTYFSVSHGFYASITFIYN). Residues 260–375 (NPLMWRYFGA…NNINNKNDMI (116 aa)) are Cytoplasmic-facing. A phosphoserine mark is found at S298 and S303. Positions 338 to 375 (PKENENQNHHHHHHHHHHHNHYNNNNNNNNINNKNDMI) are disordered. A compositionally biased stretch (basic residues) spans 346 to 358 (HHHHHHHHHHHNH). Over residues 359 to 375 (YNNNNNNNNINNKNDMI) the composition is skewed to low complexity.

Belongs to the G-protein coupled receptor 5 family. C-terminal Ser or Thr residues may be phosphorylated.

The protein localises to the membrane. Receptor for cAMP. Coordinates the aggregation of individual cells into a multicellular organism and regulates the expression of a large number of developmentally regulated genes. The activity of this receptor is mediated by G proteins. Plays a key role during tip formation and late development; involved in cAMP-directed patterning of pre stalk cells as they sort before and during tip formation. The sequence is that of Cyclic AMP receptor 2 (carB) from Dictyostelium discoideum (Social amoeba).